The primary structure comprises 381 residues: L-lactate dehydrogenase (381 aa).

One can recognise an FMN hydroxy acid dehydrogenase domain in the interval 1–380 (MIISSASDYR…KPEALVDLSK (380 aa)). Position 24 (tyrosine 24) interacts with substrate. Serine 106 and glutamine 127 together coordinate FMN. Tyrosine 129 provides a ligand contact to substrate. Threonine 155 is a binding site for FMN. Substrate is bound at residue arginine 164. Residue lysine 251 participates in FMN binding. Catalysis depends on histidine 275, which acts as the Proton acceptor. Arginine 278 serves as a coordination point for substrate. 306 to 330 (DSGIRNGLDIVRMLALGADATMLGR) provides a ligand contact to FMN.

This sequence belongs to the FMN-dependent alpha-hydroxy acid dehydrogenase family. FMN is required as a cofactor.

The protein localises to the cell inner membrane. The catalysed reaction is (S)-lactate + A = pyruvate + AH2. Catalyzes the conversion of L-lactate to pyruvate. Is coupled to the respiratory chain. In Haemophilus influenzae (strain ATCC 51907 / DSM 11121 / KW20 / Rd), this protein is L-lactate dehydrogenase.